Here is a 398-residue protein sequence, read N- to C-terminus: Bifunctional enzyme IspD/IspF (398 aa).

Residues Met-1–Ile-237 form a 2-C-methyl-D-erythritol 4-phosphate cytidylyltransferase region. The tract at residues Arg-238–Gln-398 is 2-C-methyl-D-erythritol 2,4-cyclodiphosphate synthase. A divalent metal cation-binding residues include Asp-244 and His-246. 4-CDP-2-C-methyl-D-erythritol 2-phosphate is bound by residues Asp-244–His-246 and His-270–Ser-271. His-278 is a binding site for a divalent metal cation. 4-CDP-2-C-methyl-D-erythritol 2-phosphate-binding positions include Asp-292 to Gly-294, Thr-368 to Glu-371, Phe-375, and Arg-378.

The protein in the N-terminal section; belongs to the IspD/TarI cytidylyltransferase family. IspD subfamily. It in the C-terminal section; belongs to the IspF family. It depends on a divalent metal cation as a cofactor.

It carries out the reaction 2-C-methyl-D-erythritol 4-phosphate + CTP + H(+) = 4-CDP-2-C-methyl-D-erythritol + diphosphate. It catalyses the reaction 4-CDP-2-C-methyl-D-erythritol 2-phosphate = 2-C-methyl-D-erythritol 2,4-cyclic diphosphate + CMP. It functions in the pathway isoprenoid biosynthesis; isopentenyl diphosphate biosynthesis via DXP pathway; isopentenyl diphosphate from 1-deoxy-D-xylulose 5-phosphate: step 2/6. It participates in isoprenoid biosynthesis; isopentenyl diphosphate biosynthesis via DXP pathway; isopentenyl diphosphate from 1-deoxy-D-xylulose 5-phosphate: step 4/6. In terms of biological role, bifunctional enzyme that catalyzes the formation of 4-diphosphocytidyl-2-C-methyl-D-erythritol from CTP and 2-C-methyl-D-erythritol 4-phosphate (MEP) (IspD), and catalyzes the conversion of 4-diphosphocytidyl-2-C-methyl-D-erythritol 2-phosphate (CDP-ME2P) to 2-C-methyl-D-erythritol 2,4-cyclodiphosphate (ME-CPP) with a corresponding release of cytidine 5-monophosphate (CMP) (IspF). The chain is Bifunctional enzyme IspD/IspF from Bartonella tribocorum (strain CIP 105476 / IBS 506).